Here is a 185-residue protein sequence, read N- to C-terminus: ATP synthase subunit b, chloroplastic (185 aa).

A helical transmembrane segment spans residues 27–49 (LATNPINLSVVLGVLIFFGKGVL).

This sequence belongs to the ATPase B chain family. As to quaternary structure, F-type ATPases have 2 components, F(1) - the catalytic core - and F(0) - the membrane proton channel. F(1) has five subunits: alpha(3), beta(3), gamma(1), delta(1), epsilon(1). F(0) has four main subunits: a(1), b(1), b'(1) and c(10-14). The alpha and beta chains form an alternating ring which encloses part of the gamma chain. F(1) is attached to F(0) by a central stalk formed by the gamma and epsilon chains, while a peripheral stalk is formed by the delta, b and b' chains.

Its subcellular location is the plastid. It is found in the chloroplast thylakoid membrane. In terms of biological role, f(1)F(0) ATP synthase produces ATP from ADP in the presence of a proton or sodium gradient. F-type ATPases consist of two structural domains, F(1) containing the extramembraneous catalytic core and F(0) containing the membrane proton channel, linked together by a central stalk and a peripheral stalk. During catalysis, ATP synthesis in the catalytic domain of F(1) is coupled via a rotary mechanism of the central stalk subunits to proton translocation. Its function is as follows. Component of the F(0) channel, it forms part of the peripheral stalk, linking F(1) to F(0). The polypeptide is ATP synthase subunit b, chloroplastic (Vitis vinifera (Grape)).